A 166-amino-acid polypeptide reads, in one-letter code: Endoribonuclease YbeY (166 aa).

Positions 132, 136, and 142 each coordinate Zn(2+).

Belongs to the endoribonuclease YbeY family. It depends on Zn(2+) as a cofactor.

The protein localises to the cytoplasm. Single strand-specific metallo-endoribonuclease involved in late-stage 70S ribosome quality control and in maturation of the 3' terminus of the 16S rRNA. The sequence is that of Endoribonuclease YbeY from Clostridium botulinum (strain Alaska E43 / Type E3).